We begin with the raw amino-acid sequence, 264 residues long: Glutamate racemase (264 aa).

Substrate contacts are provided by residues 10-11 and 42-43; these read DS and YG. Catalysis depends on C73, which acts as the Proton donor/acceptor. 74 to 75 serves as a coordination point for substrate; the sequence is NT. Catalysis depends on C183, which acts as the Proton donor/acceptor. Substrate is bound at residue 184–185; that stretch reads TH.

Belongs to the aspartate/glutamate racemases family.

It catalyses the reaction L-glutamate = D-glutamate. The protein operates within cell wall biogenesis; peptidoglycan biosynthesis. Functionally, provides the (R)-glutamate required for cell wall biosynthesis. This is Glutamate racemase from Streptococcus uberis (strain ATCC BAA-854 / 0140J).